The following is a 79-amino-acid chain: Ponericin-W-like 32.1 (79 aa).

An N-terminal signal peptide occupies residues 1–23 (MKCKKQLLVIFFAYFLVVNESEA). Positions 49–79 (RALMKRDLEDIMDPYQKNLKLDRYLRRLAMD) are excised as a propeptide.

The protein belongs to the non-disulfide-bridged peptide (NDBP) superfamily. Medium-length antimicrobial peptide (group 3) family. Ponericin-W subfamily. Expressed by the venom gland.

It localises to the secreted. Its subcellular location is the target cell membrane. In terms of biological role, antimicrobial peptide with potent activity against a range of Gram-positive and Gram-negative bacteria. Has high hemolytic activity against erythrocytes. May act by disrupting the integrity of the bacterial cell membrane. In Lychas mucronatus (Chinese swimming scorpion), this protein is Ponericin-W-like 32.1.